The chain runs to 276 residues: ATP synthase subunit a 2 (276 aa).

Helical transmembrane passes span 45–65, 105–125, 154–173, 226–246, and 247–267; these read AVHV…VWLF, VIAP…LMDL, VNVT…YYSI, LLFI…SVPW, and AIFH…LTIV.

The protein belongs to the ATPase A chain family. F-type ATPases have 2 components, CF(1) - the catalytic core - and CF(0) - the membrane proton channel. CF(1) has five subunits: alpha(3), beta(3), gamma(1), delta(1), epsilon(1). CF(0) has three main subunits: a(1), b(2) and c(9-12). The alpha and beta chains form an alternating ring which encloses part of the gamma chain. CF(1) is attached to CF(0) by a central stalk formed by the gamma and epsilon chains, while a peripheral stalk is formed by the delta and b chains.

The protein resides in the cell inner membrane. Its function is as follows. Key component of the proton channel; it plays a direct role in the translocation of protons across the membrane. The chain is ATP synthase subunit a 2 from Hahella chejuensis (strain KCTC 2396).